Reading from the N-terminus, the 104-residue chain is UPF0473 protein LJ_0477 (104 aa).

Belongs to the UPF0473 family.

This is UPF0473 protein LJ_0477 from Lactobacillus johnsonii (strain CNCM I-12250 / La1 / NCC 533).